A 378-amino-acid polypeptide reads, in one-letter code: Probable protein phosphatase 2C 55 (378 aa).

2 disordered regions span residues 1–59 (MRRH…ASKG) and 79–115 (EGEA…GVGC). Residues 7-26 (LGLLRRAAASSTSAASSRAG) show a composition bias toward low complexity. Positions 92–104 (GGRRGRNSKRQPP) are enriched in basic residues. A PPM-type phosphatase domain is found at 122-369 (SWGYSSFQGR…DNVTCIVLQF (248 aa)). 4 residues coordinate Mn(2+): Asp158, Gly159, Asp321, and Asp360.

It belongs to the PP2C family. The cofactor is Mg(2+). Mn(2+) is required as a cofactor.

It catalyses the reaction O-phospho-L-seryl-[protein] + H2O = L-seryl-[protein] + phosphate. The enzyme catalyses O-phospho-L-threonyl-[protein] + H2O = L-threonyl-[protein] + phosphate. The protein is Probable protein phosphatase 2C 55 of Oryza sativa subsp. japonica (Rice).